The chain runs to 415 residues: Actin-like protein 7B (415 aa).

The interval Met1–Ala35 is disordered. A Phosphoserine modification is found at Ser6.

The protein belongs to the actin family.

The protein localises to the cytoplasm. It is found in the cytoskeleton. This is Actin-like protein 7B (ACTL7B) from Macaca fascicularis (Crab-eating macaque).